The following is a 455-amino-acid chain: MTQIMTPKTIVHELERHIIGQNDAKKAVAIALRNRWRRMQLDNEMRQEVTPKNILMIGPTGVGKTEIARRLAKLADAPFIKVEATKFTEVGYVGKDVESIIRDLVETAVKMKREEAKEKVTEKAARLAEDRILDVLIPPARTSESKVGFANEPAEDAASKKEKENKTREIFRKKIQNGELDDKEIEIEVAVAPKTIGVMGPPGMEDMTSQLQDLFSSLSTDKKKNKKMRIKDAIKLAQDEEAAKLVNEEDIKARALEAVEQNGIVFLDEIDKVCRKSSNSGADVSREGVQRDLLPLVEGSTVSTKYGVIKTDHILFIASGAFHVAKPSDLIPELQGRLPIRVELKSLEIEDFVRILREPDCSILKQYIALMKTEGIDLSFEEDAIRKIAEIAYKVNEEVENIGARRLHTVMERLLEKISFDAPELVEKNINITTDYVNEKLGNLVKNKDLSQYIL.

ATP-binding positions include Ile19 and 61–66 (GVGKTE). The interval 144–163 (ESKVGFANEPAEDAASKKEK) is disordered. Asp268, Glu333, and Arg405 together coordinate ATP.

The protein belongs to the ClpX chaperone family. HslU subfamily. As to quaternary structure, a double ring-shaped homohexamer of HslV is capped on each side by a ring-shaped HslU homohexamer. The assembly of the HslU/HslV complex is dependent on binding of ATP.

It localises to the cytoplasm. ATPase subunit of a proteasome-like degradation complex; this subunit has chaperone activity. The binding of ATP and its subsequent hydrolysis by HslU are essential for unfolding of protein substrates subsequently hydrolyzed by HslV. HslU recognizes the N-terminal part of its protein substrates and unfolds these before they are guided to HslV for hydrolysis. This is ATP-dependent protease ATPase subunit HslU from Francisella tularensis subsp. holarctica (strain FTNF002-00 / FTA).